Consider the following 204-residue polypeptide: Large ribosomal subunit protein eL15 (204 aa).

This sequence belongs to the eukaryotic ribosomal protein eL15 family.

The sequence is that of Large ribosomal subunit protein eL15 (RpL15) from Chironomus tentans (Midge).